The sequence spans 155 residues: Ribosomal RNA large subunit methyltransferase H (155 aa).

S-adenosyl-L-methionine is bound by residues glycine 104 and 123-128 (LSAMTF).

This sequence belongs to the RNA methyltransferase RlmH family. Homodimer.

The protein localises to the cytoplasm. It catalyses the reaction pseudouridine(1915) in 23S rRNA + S-adenosyl-L-methionine = N(3)-methylpseudouridine(1915) in 23S rRNA + S-adenosyl-L-homocysteine + H(+). Functionally, specifically methylates the pseudouridine at position 1915 (m3Psi1915) in 23S rRNA. This is Ribosomal RNA large subunit methyltransferase H from Oleidesulfovibrio alaskensis (strain ATCC BAA-1058 / DSM 17464 / G20) (Desulfovibrio alaskensis).